The following is a 305-amino-acid chain: UDP-3-O-acyl-N-acetylglucosamine deacetylase (305 aa).

3 residues coordinate Zn(2+): His-78, His-237, and Asp-241. The active-site Proton donor is His-264.

Belongs to the LpxC family. Zn(2+) is required as a cofactor.

It catalyses the reaction a UDP-3-O-[(3R)-3-hydroxyacyl]-N-acetyl-alpha-D-glucosamine + H2O = a UDP-3-O-[(3R)-3-hydroxyacyl]-alpha-D-glucosamine + acetate. It participates in glycolipid biosynthesis; lipid IV(A) biosynthesis; lipid IV(A) from (3R)-3-hydroxytetradecanoyl-[acyl-carrier-protein] and UDP-N-acetyl-alpha-D-glucosamine: step 2/6. Functionally, catalyzes the hydrolysis of UDP-3-O-myristoyl-N-acetylglucosamine to form UDP-3-O-myristoylglucosamine and acetate, the committed step in lipid A biosynthesis. The chain is UDP-3-O-acyl-N-acetylglucosamine deacetylase from Cupriavidus necator (strain ATCC 17699 / DSM 428 / KCTC 22496 / NCIMB 10442 / H16 / Stanier 337) (Ralstonia eutropha).